We begin with the raw amino-acid sequence, 139 residues long: D-ribose pyranase (139 aa).

Residue His-20 is the Proton donor of the active site. Residues Asp-28, His-106, and Tyr-128–Asn-130 contribute to the substrate site.

Belongs to the RbsD / FucU family. RbsD subfamily. In terms of assembly, homodecamer.

The protein resides in the cytoplasm. The catalysed reaction is beta-D-ribopyranose = beta-D-ribofuranose. It participates in carbohydrate metabolism; D-ribose degradation; D-ribose 5-phosphate from beta-D-ribopyranose: step 1/2. Its function is as follows. Catalyzes the interconversion of beta-pyran and beta-furan forms of D-ribose. The sequence is that of D-ribose pyranase from Aeromonas hydrophila subsp. hydrophila (strain ATCC 7966 / DSM 30187 / BCRC 13018 / CCUG 14551 / JCM 1027 / KCTC 2358 / NCIMB 9240 / NCTC 8049).